A 609-amino-acid polypeptide reads, in one-letter code: Acetyl-coenzyme A carboxylase carboxyl transferase subunits beta/alpha (609 aa).

Positions 1–271 (MTLEATAIEA…QTAEFLLTHG (271 aa)) are acetyl-coenzyme A carboxylase carboxyl transferase subunit beta. The CoA carboxyltransferase N-terminal domain maps to 39–308 (SWLLCGGCGT…GIPRQAGRPD (270 aa)). Residues 39–559 (SWLLCGGCGT…REALRGALAD (521 aa)) are carboxyltransferase. Zn(2+)-binding residues include C43, C46, C62, and C65. The segment at 43–65 (CGGCGTMLYERRFAREGRVCADC) adopts a C4-type zinc-finger fold. The interval 272–582 (VVDLISPRRE…RARFRQFGVA (311 aa)) is acetyl-coenzyme A carboxylase carboxyl transferase subunit alpha. Residues 314–559 (DPEQLARRDA…REALRGALAD (246 aa)) enclose the CoA carboxyltransferase C-terminal domain. A compositionally biased stretch (low complexity) spans 582 to 592 (ATPAPATAPAA). Residues 582-609 (ATPAPATAPAASDDAHESQTDRSVEATR) are disordered. Residues 594–609 (DDAHESQTDRSVEATR) are compositionally biased toward basic and acidic residues.

It in the N-terminal section; belongs to the AccD/PCCB family. This sequence in the C-terminal section; belongs to the AccA family. As to quaternary structure, acetyl-CoA carboxylase is a heterotetramer composed of biotin carboxyl carrier protein (AccB), biotin carboxylase (AccC) and two subunits of ACCase subunit beta/alpha. Zn(2+) serves as cofactor.

The protein resides in the cytoplasm. The catalysed reaction is N(6)-carboxybiotinyl-L-lysyl-[protein] + acetyl-CoA = N(6)-biotinyl-L-lysyl-[protein] + malonyl-CoA. It functions in the pathway lipid metabolism; malonyl-CoA biosynthesis; malonyl-CoA from acetyl-CoA: step 1/1. In terms of biological role, component of the acetyl coenzyme A carboxylase (ACC) complex. Biotin carboxylase (BC) catalyzes the carboxylation of biotin on its carrier protein (BCCP) and then the CO(2) group is transferred by the transcarboxylase to acetyl-CoA to form malonyl-CoA. The sequence is that of Acetyl-coenzyme A carboxylase carboxyl transferase subunits beta/alpha (accD) from Frankia alni (strain DSM 45986 / CECT 9034 / ACN14a).